The following is a 293-amino-acid chain: MKKPILGSHVGMSKSNKHGEYLIGSVKEALSYEANTLMFYTGAPQNSVRTATDKLYIEEFNQLLKENNINKDHIVVHAPYIINISNPVNQTTWDFGVDFLKQEIKRCEDIGVKILVLHPGARLKGDYTDALNALVKGLNAVASSQTNVIIALETMAGKGTEVGLSLNDFKYVIDNVNEPEKVAVCLDTCHMHDAGYDFNNWELIKEEINKTIGKDKVLCFHLNDSKNPLLAHKDRHENIGYGYIGFDNLLKVLWDEEYIDIPKILETPYVEDKPPYKEEIENLINKNFSKKVK.

Zn(2+) is bound by residues histidine 77, histidine 118, glutamate 153, aspartate 187, histidine 190, histidine 221, aspartate 234, histidine 236, and glutamate 266.

This sequence belongs to the AP endonuclease 2 family. Zn(2+) is required as a cofactor.

The catalysed reaction is Endonucleolytic cleavage to 5'-phosphooligonucleotide end-products.. Endonuclease IV plays a role in DNA repair. It cleaves phosphodiester bonds at apurinic or apyrimidinic (AP) sites, generating a 3'-hydroxyl group and a 5'-terminal sugar phosphate. The polypeptide is Probable endonuclease 4 (Mesoplasma florum (strain ATCC 33453 / NBRC 100688 / NCTC 11704 / L1) (Acholeplasma florum)).